Consider the following 110-residue polypeptide: U32-theraphotoxin-Cg1a (110 aa).

The N-terminal stretch at 1-19 (MNHCFLILFTLIVFTVVWS) is a signal peptide. Positions 20–43 (LEENEEYPDEDEMIESFMDGYSYR) are excised as a propeptide. 4 disulfide bridges follow: cysteine 49-cysteine 63, cysteine 56-cysteine 69, cysteine 60-cysteine 105, and cysteine 62-cysteine 80.

The protein belongs to the neurotoxin 03 (Tx2) family. 02 subfamily. In terms of tissue distribution, expressed by the venom gland.

Its subcellular location is the secreted. Functionally, probable ion channel inhibitor. The sequence is that of U32-theraphotoxin-Cg1a from Chilobrachys guangxiensis (Chinese earth tiger tarantula).